We begin with the raw amino-acid sequence, 512 residues long: Centrosomal protein CCDC61 (512 aa).

At Met-1 the chain carries N-acetylmethionine. Residues 1-143 (MDQPAGLQVD…PLPLPYQGKP (143 aa)) form a head domain region. Coiled-coil stretches lie at residues 178 to 205 (IWHLREQVSRLASEKRELEAQLGRSREE) and 248 to 275 (CRRLAKELEEAKASERSLRARLKTLTSE). A disordered region spans residues 276–477 (LALYKRGRRT…KSLANSGGWV (202 aa)). Residue Thr-285 is modified to Phosphothreonine. Residues 293 to 306 (TREDRASSSRERSA) are compositionally biased toward basic and acidic residues. A phosphoserine mark is found at Ser-334, Ser-336, Ser-373, and Ser-376. The segment covering 407-425 (RSSSVDSFRSRCSSASSCS) has biased composition (low complexity). A phosphoserine mark is found at Ser-447 and Ser-473.

It belongs to the CCDC61 family. Forms homodimers (via head domain). Interacts with CEP170. Interacts with PCM1 and CEP131. Binds tubulin.

Its subcellular location is the cytoplasm. It is found in the cytoskeleton. The protein resides in the microtubule organizing center. It localises to the centrosome. The protein localises to the centriolar satellite. Its subcellular location is the cilium basal body. Its function is as follows. Microtubule-binding centrosomal protein required for centriole cohesion, independently of the centrosome-associated protein/CEP250 and rootletin/CROCC linker. In interphase, required for anchoring microtubule at the mother centriole subdistal appendages and for centrosome positioning. During mitosis, may be involved in spindle assembly and chromatin alignment by regulating the organization of spindle microtubules into a symmetrical structure. Has been proposed to play a role in CEP170 recruitment to centrosomes. However, this function could not be confirmed. Plays a non-essential role in ciliogenesis. The chain is Centrosomal protein CCDC61 from Homo sapiens (Human).